The following is a 577-amino-acid chain: Moesin (577 aa).

Residues 2–295 enclose the FERM domain; that stretch reads PKTISVRVTT…GNHELYMRRR (294 aa). Residue Ser74 is modified to Phosphoserine. Lys79 is subject to N6-acetyllysine. Lys83 bears the N6-succinyllysine mark. A [IL]-x-C-x-x-[DE] motif motif is present at residues 115-120; the sequence is IYCPPE. Phosphotyrosine is present on Tyr116. At Cys117 the chain carries S-nitrosocysteine. 2 positions are modified to N6-acetyllysine: Lys139 and Lys165. 3 disordered regions span residues 322-342, 358-419, and 468-518; these read LLEN…KIER, TKKA…QLAS, and STPH…NERV. The span at 358–401 shows a compositional bias: basic and acidic residues; sequence TKKAQQELEEQTRRALELEQERKRAQSEAEKLAKERQEAEEAKE. Residue Ser407 is modified to Phosphoserine. Positions 492–518 are enriched in basic and acidic residues; sequence AELRADAMAKDRSEEERTTEAEKNERV. Ser527 carries the phosphoserine modification. Thr558 carries the phosphothreonine; by ROCK2 and STK10 modification.

In terms of assembly, in resting T-cells, part of a PAG1-NHERF1-MSN complex which is disrupted upon TCR activation. Interacts with NHERF1. Interacts with PPP1R16B. Interacts with SELPLG and SYK; these interactions mediate the activation of SYK by SELPLG. Interacts with PDPN (via cytoplasmic domain); this interaction activates RHOA and promotes epithelial-mesenchymal transition. Interacts with SPN/CD43 cytoplasmic tail. Interacts with CD44. Interacts with ICAM2. Interacts with ICAM3 (via C-terminus). Interacts with PDZD8. Interacts with F-actin. Interacts with CD46. Interacts with PTPN6. Phosphorylation on Thr-558 by STK10 negatively regulates lymphocyte migration and polarization. Phosphorylation on Thr-558 is crucial for the formation of microvilli-like structures. Phosphorylation by ROCK2 suppresses the head-to-tail association of the N-terminal and C-terminal halves resulting in an opened conformation which is capable of actin and membrane-binding. In terms of processing, S-nitrosylation of Cys-117 is induced by interferon-gamma and oxidatively-modified low-densitity lipoprotein (LDL(ox)) implicating the iNOS-S100A8/9 transnitrosylase complex.

It is found in the cell membrane. Its subcellular location is the cytoplasm. It localises to the cytoskeleton. The protein localises to the apical cell membrane. The protein resides in the cell projection. It is found in the microvillus membrane. Its subcellular location is the microvillus. Functionally, ezrin-radixin-moesin (ERM) family protein that connects the actin cytoskeleton to the plasma membrane and thereby regulates the structure and function of specific domains of the cell cortex. Tethers actin filaments by oscillating between a resting and an activated state providing transient interactions between moesin and the actin cytoskeleton. Once phosphorylated on its C-terminal threonine, moesin is activated leading to interaction with F-actin and cytoskeletal rearrangement. These rearrangements regulate many cellular processes, including cell shape determination, membrane transport, and signal transduction. The role of moesin is particularly important in immunity acting on both T and B-cells homeostasis and self-tolerance, regulating lymphocyte egress from lymphoid organs. Modulates phagolysosomal biogenesis in macrophages. Also participates in immunologic synapse formation. The polypeptide is Moesin (Mus musculus (Mouse)).